A 186-amino-acid polypeptide reads, in one-letter code: dCTP deaminase (186 aa).

107–112 (KSSYAR) contacts dCTP. The active-site Proton donor/acceptor is the Glu-133. DCTP contacts are provided by Gln-152, Tyr-166, and Gln-176.

Belongs to the dCTP deaminase family. As to quaternary structure, homotrimer.

The enzyme catalyses dCTP + H2O + H(+) = dUTP + NH4(+). The protein operates within pyrimidine metabolism; dUMP biosynthesis; dUMP from dCTP (dUTP route): step 1/2. Catalyzes the deamination of dCTP to dUTP. The sequence is that of dCTP deaminase from Chloroflexus aurantiacus (strain ATCC 29366 / DSM 635 / J-10-fl).